Reading from the N-terminus, the 113-residue chain is Putative membrane protein insertion efficiency factor (113 aa).

Belongs to the UPF0161 family.

The protein resides in the cell inner membrane. Its function is as follows. Could be involved in insertion of integral membrane proteins into the membrane. This chain is Putative membrane protein insertion efficiency factor, found in Campylobacter curvus (strain 525.92).